Reading from the N-terminus, the 185-residue chain is Ribosome-recycling factor (185 aa).

Belongs to the RRF family.

The protein localises to the cytoplasm. Its function is as follows. Responsible for the release of ribosomes from messenger RNA at the termination of protein biosynthesis. May increase the efficiency of translation by recycling ribosomes from one round of translation to another. The sequence is that of Ribosome-recycling factor from Francisella philomiragia subsp. philomiragia (strain ATCC 25017 / CCUG 19701 / FSC 153 / O#319-036).